The sequence spans 485 residues: Calcium/manganese antiporter SLC30A10 (485 aa).

The Cytoplasmic segment spans residues M1–R10. Residues L11–L31 form a helical membrane-spanning segment. Residues G32–D40 lie on the Extracellular side of the membrane. Residues S41–A61 traverse the membrane as a helical segment. Residues R62–G81 are Cytoplasmic-facing. The chain crosses the membrane as a helical span at residues A82–L102. At R103–P113 the chain is on the extracellular side. Residues E114–F134 form a helical membrane-spanning segment. At Q135 to H244 the chain is on the cytoplasmic side. The interval F167–T196 is disordered. The chain crosses the membrane as a helical span at residues V245–L265. Residues P266–Y278 lie on the Extracellular side of the membrane. A helical transmembrane segment spans residues I279–I299. Residues K300–F485 are Cytoplasmic-facing. The tract at residues Q308–F485 is required for plasma membrane localization.

This sequence belongs to the cation diffusion facilitator (CDF) transporter (TC 2.A.4) family. SLC30A subfamily. As to quaternary structure, forms homodimers. Forms heterodimers and high-molecular weight oligomers with SLC30A3, SLC30A2 and SLC30A4; heterodimerization is mediated by covalent-bound tyrosine residues, occurs probably in a tissue-specific manner and could mediate the intracellular zinc transport activity into early endosomes and recycling endosomes. In terms of tissue distribution, specifically expressed in fetal liver and fetal brain. Expressed in adult tissues with relative levels small intestine &gt; liver &gt; testes &gt; brain &gt; ovary &gt; colon &gt; cervix &gt; prostate &gt; placenta. Expressed in liver and neurons of the nervous system (at protein level).

It localises to the cell membrane. The protein resides in the golgi apparatus membrane. It is found in the recycling endosome membrane. The protein localises to the early endosome membrane. The catalysed reaction is Mn(2+)(out) + Ca(2+)(in) = Mn(2+)(in) + Ca(2+)(out). It catalyses the reaction Zn(2+)(in) = Zn(2+)(out). Calcium:manganese antiporter of the plasma membrane mediating the efflux of intracellular manganese coupled to an active extracellular calcium exchange. Required for intracellular manganese homeostasis, an essential cation for the function of several enzymes, including some crucially important for the metabolism of neurotransmitters and other neuronal metabolic pathways. Manganese can also be cytotoxic and induce oxidative stress, mitochondrial dysfunction and apoptosis. Could also have an intracellular zinc ion transporter activity, directly regulating intracellular zinc ion homeostasis and more indirectly various signaling pathway and biological processes. This is Calcium/manganese antiporter SLC30A10 from Homo sapiens (Human).